A 235-amino-acid chain; its full sequence is LexA repressor (235 aa).

A DNA-binding region (H-T-H motif) is located at residues 26–46 (FDEMKEALDLASKSGIHRLIT). The segment at 72–104 (QATTAAPPKGRGAFRPQVLEGGGQAPTTSAQPQ) is disordered. Catalysis depends on for autocatalytic cleavage activity residues Ser156 and Lys193.

Belongs to the peptidase S24 family. As to quaternary structure, homodimer.

It catalyses the reaction Hydrolysis of Ala-|-Gly bond in repressor LexA.. Its function is as follows. Represses a number of genes involved in the response to DNA damage (SOS response), including recA and lexA. In the presence of single-stranded DNA, RecA interacts with LexA causing an autocatalytic cleavage which disrupts the DNA-binding part of LexA, leading to derepression of the SOS regulon and eventually DNA repair. The sequence is that of LexA repressor from Caulobacter sp. (strain K31).